Consider the following 408-residue polypeptide: Arginine biosynthesis bifunctional protein ArgJ (408 aa).

T156, K182, T193, E279, N403, and S408 together coordinate substrate. The active-site Nucleophile is T193.

This sequence belongs to the ArgJ family. Heterotetramer of two alpha and two beta chains.

The protein resides in the cytoplasm. It carries out the reaction N(2)-acetyl-L-ornithine + L-glutamate = N-acetyl-L-glutamate + L-ornithine. The enzyme catalyses L-glutamate + acetyl-CoA = N-acetyl-L-glutamate + CoA + H(+). Its pathway is amino-acid biosynthesis; L-arginine biosynthesis; L-ornithine and N-acetyl-L-glutamate from L-glutamate and N(2)-acetyl-L-ornithine (cyclic): step 1/1. It functions in the pathway amino-acid biosynthesis; L-arginine biosynthesis; N(2)-acetyl-L-ornithine from L-glutamate: step 1/4. Catalyzes two activities which are involved in the cyclic version of arginine biosynthesis: the synthesis of N-acetylglutamate from glutamate and acetyl-CoA as the acetyl donor, and of ornithine by transacetylation between N(2)-acetylornithine and glutamate. This chain is Arginine biosynthesis bifunctional protein ArgJ, found in Dechloromonas aromatica (strain RCB).